The sequence spans 696 residues: Solute carrier family 53 member 1 (696 aa).

Residues 1-228 (MKFAEHLSAH…RVPPLGAAQP (228 aa)) are Cytoplasmic-facing. In terms of domain architecture, SPX spans 2-224 (KFAEHLSAHI…MKRLRVPPLG (223 aa)). An important for inositol polyphosphate binding region spans residues 158–165 (KILKKHDK). A helical membrane pass occupies residues 229 to 259 (APAWTTFRVGLFCGIFIVLNITLVFAAVFKL). At 260-264 (ETDRT) the chain is on the extracellular side. Residues 265 to 296 (VWPLIRIYRGGFLLIEFLFLLGINTYGWRQAG) form a helical membrane-spanning segment. At 297–309 (VNHVLIFELNPRN) the chain is on the cytoplasmic side. Residues 310–337 (NLSHQHLFEIAGFLGILWCLSLLACFFA) form a helical membrane-spanning segment. Residues 338-343 (PISIIP) lie on the Extracellular side of the membrane. A helical membrane pass occupies residues 344–365 (IYVYPLALYGFMVFFLINPTKT). Positions 366–383 (FYYKSRFWLLKLLFRVFT) form an intramembrane region, helical. Residues 384-388 (APFHK) lie on the Cytoplasmic side of the membrane. The discontinuously helical transmembrane segment at 389–422 (VGFADFWLADQLNSLSVILMDLEYMICFYSFELK) threads the bilayer. Phosphate-binding residues include Asp-398 and Asn-401. The Extracellular segment spans residues 423–429 (WDESKGL). The chain crosses the membrane as a discontinuously helical span at residues 430–471 (LPNDPQGPEFCHKYTYGVRAIVQCIPAWLRFIQCLRRYRDTR). The 205-residue stretch at 439–643 (FCHKYTYGVR…LNADDQTLLE (205 aa)) folds into the EXS domain. Arg-472 is a topological domain (cytoplasmic). A helical membrane pass occupies residues 473–503 (AFPHLVNAGKYSTTFFTVTFAALYSTHKEQN). Phosphate is bound by residues Lys-482 and Tyr-483. Over 504 to 506 (HPD) the chain is Extracellular. A helical membrane pass occupies residues 507 to 534 (YKVFFYLWVFFCIISSCYTLIWDLKMDW). Over 535 to 553 (GLFDKNAGENTFLREEIVY) the chain is Cytoplasmic. A discontinuously helical membrane pass occupies residues 554–585 (PQKAYYYCAIIEDVILRFAWTIQISITVTTFK). Arg-570 contributes to the phosphate binding site. The Extracellular portion of the chain corresponds to 586–587 (PH). A helical membrane pass occupies residues 588 to 626 (VGDIIATVFAPLEVFRRFVWNFFRLENEHLNNCGEFRAV). Residues Arg-603 and Arg-604 each contribute to the phosphate site. Residues 627–696 (RDISVAPLNA…IEDTDDEANT (70 aa)) are Cytoplasmic-facing. The residue at position 668 (Ser-668) is a Phosphoserine. Residues 672–696 (PRLASQSKARDTKVLIEDTDDEANT) are disordered. Thr-690 is modified (phosphothreonine).

The protein belongs to the SYG1 (TC 2.A.94) family. As to quaternary structure, homodimer.

It localises to the cell membrane. It carries out the reaction phosphate(in) = phosphate(out). Inorganic ion transporter that mediates phosphate ion export across plasma membrane. Plays a major role in phosphate homeostasis, preventing intracellular phosphate accumulation and possible calcium phosphate precipitation, ultimately preserving calcium signaling. Binds inositol hexakisphosphate (Ins6P) and similar inositol polyphosphates, such as 5-diphospho-inositol pentakisphosphate (5-InsP7), which are important intracellular signaling molecules involved in regulation of phosphate flux. This chain is Solute carrier family 53 member 1 (Xpr1), found in Mus pahari (Gairdner's shrew-mouse).